The primary structure comprises 158 residues: 3-hydroxyacyl-[acyl-carrier-protein] dehydratase FabZ (158 aa).

Histidine 62 is a catalytic residue.

The protein belongs to the thioester dehydratase family. FabZ subfamily.

Its subcellular location is the cytoplasm. The enzyme catalyses a (3R)-hydroxyacyl-[ACP] = a (2E)-enoyl-[ACP] + H2O. Functionally, involved in unsaturated fatty acids biosynthesis. Catalyzes the dehydration of short chain beta-hydroxyacyl-ACPs and long chain saturated and unsaturated beta-hydroxyacyl-ACPs. The chain is 3-hydroxyacyl-[acyl-carrier-protein] dehydratase FabZ from Novosphingobium aromaticivorans (strain ATCC 700278 / DSM 12444 / CCUG 56034 / CIP 105152 / NBRC 16084 / F199).